The following is a 1060-amino-acid chain: CCR4-NOT transcriptional complex subunit CAF120 (1060 aa).

The PH domain occupies 75 to 204 (RRYHEGVFLI…WNSAIRLCLY (130 aa)). A compositionally biased stretch (low complexity) spans 465 to 481 (KLSYGSKSSSNNSSKNS). Disordered stretches follow at residues 465–589 (KLSY…TSCG), 801–942 (EHRS…NMQA), and 955–1060 (QQPN…PYAQ). Positions 490–504 (LSSSSEQDLNNSDSP) are enriched in polar residues. Phosphoserine is present on residues S491, S510, S518, S538, and S556. Composition is skewed to basic and acidic residues over residues 571–589 (NDRK…TSCG) and 801–814 (EHRS…RSPE). Over residues 845–883 (SITPQRGQPVPSGQQISSYVQPANINSPNKMYGANNSAM) the composition is skewed to polar residues. Phosphoserine is present on residues S871 and S885. 3 stretches are compositionally biased toward polar residues: residues 900 to 923 (QGWN…TQPQ), 931 to 942 (PYSTGNRPNMQA), and 1048 to 1060 (FMPS…PYAQ).

This sequence belongs to the CAF120 family. In terms of assembly, subunit of the 1.0 MDa CCR4-NOT core complex that contains CCR4, CAF1, CAF120, NOT1, NOT2, NOT3, NOT4, NOT5, CAF40 and CAF130. In the complex interacts with NOT1. The core complex probably is part of a less characterized 1.9 MDa CCR4-NOT complex.

The protein localises to the cytoplasm. Its subcellular location is the nucleus. It localises to the bud neck. Its function is as follows. Acts as a component of the CCR4-NOT core complex, which in the nucleus seems to be a general transcription factor, and in the cytoplasm the major mRNA deadenylase involved in mRNA turnover. The NOT protein subcomplex negatively regulates the basal and activated transcription of many genes. Preferentially affects TC-type TATA element-dependent transcription. Could directly or indirectly inhibit component(s) of the general transcription machinery. The protein is CCR4-NOT transcriptional complex subunit CAF120 (CAF120) of Saccharomyces cerevisiae (strain ATCC 204508 / S288c) (Baker's yeast).